A 266-amino-acid chain; its full sequence is Apolipoprotein A-I (266 aa).

A signal peptide spans 1 to 18 (MKAVVLTLAVLFLTGSQA). Repeat copies occupy residues 67 to 88 (LKLL…EQIG) and 89 to 110 (PVTQ…QEMN). Residues 67–266 (LKLLDNWDSL…DEATKKLNSQ (200 aa)) form a 10 X approximate tandem repeats region. Methionine 109 carries the methionine sulfoxide modification. A 3; half-length repeat occupies 111–121 (KDLEEVKKKVQ). 5 repeat units span residues 122-143 (PYLD…QKVA), 144-165 (PLGA…EKLS), 166-187 (PLGE…AQLA), 188-209 (PYGE…EGGG), and 210-231 (AALT…EKAK). One copy of the 9; half-length repeat lies at 232–242 (PALEDLRQGLL). Repeat 10 spans residues 243–266 (PVLENFRVSLLAAVDEATKKLNSQ).

It belongs to the apolipoprotein A1/A4/E family. As to quaternary structure, homodimer. Interacts with APOA1BP and CLU. Component of a sperm activating protein complex (SPAP), consisting of APOA1, an immunoglobulin heavy chain, an immunoglobulin light chain and albumin. Interacts with NDRG1. Interacts with SCGB3A2. Interacts with NAXE and YJEFN3. Glycosylated. Post-translationally, palmitoylated. In terms of processing, phosphorylation sites are present in the extracellular medium.

Its subcellular location is the secreted. In terms of biological role, participates in the reverse transport of cholesterol from tissues to the liver for excretion by promoting cholesterol efflux from tissues and by acting as a cofactor for the lecithin cholesterol acyltransferase (LCAT). As part of the SPAP complex, activates spermatozoa motility. The protein is Apolipoprotein A-I (APOA1) of Leptonychotes weddellii (Weddell seal).